Reading from the N-terminus, the 223-residue chain is MPAALQDHFFQRDAQVLARDLLGKVIRHKVGELWLAARIIETEAYYCAEKGSHASLGYTEKRKALFLEGGHIYMYYARGGDSLNFSAEGPGNAVLIKSAFPWTDATSDENALAQMQLNNPDASGAIRPPQRLCAGQTLLCKALGLKVPAWDAKRFDPQRLLVEDVGQTPERIIQTTRLGIPSGRDEHLMYRFVDAGYARFCTRNPLRRGQVEGRDYLFLDQGN.

This sequence belongs to the DNA glycosylase MPG family.

The protein is Putative 3-methyladenine DNA glycosylase of Pseudomonas syringae pv. tomato (strain ATCC BAA-871 / DC3000).